The primary structure comprises 167 residues: Small heat shock protein C1 (167 aa).

In terms of domain architecture, sHSP spans 59–167 (PFYESNSIKS…EQDAKEIPIN (109 aa)).

Belongs to the small heat shock protein (HSP20) family.

This is Small heat shock protein C1 (hspC1) from Rickettsia bellii (strain RML369-C).